Consider the following 367-residue polypeptide: Peroxidase 1 (367 aa).

The signal sequence occupies residues 1-33 (MAKESKLTAGVAAALTVVAACALCLLLPATARA). Residue Gln-34 is modified to Pyrrolidone carboxylic acid. 4 disulfide bridges follow: Cys-44–Cys-125, Cys-77–Cys-82, Cys-131–Cys-335, and Cys-209–Cys-244. The Proton acceptor role is filled by His-75. Residues Asp-76, Val-79, Gly-81, Asp-83, and Ser-85 each contribute to the Ca(2+) site. Asn-164 carries an N-linked (GlcNAc...) asparagine glycan. Pro-172 lines the substrate pocket. Residue His-202 coordinates heme b. Thr-203 contributes to the Ca(2+) binding site. Asn-218 and Asn-247 each carry an N-linked (GlcNAc...) asparagine glycan. Ca(2+) contacts are provided by Asp-259, Thr-262, and Asp-267. An N-linked (GlcNAc...) asparagine glycan is attached at Asn-303.

It belongs to the peroxidase family. Classical plant (class III) peroxidase subfamily. It depends on heme b as a cofactor. The cofactor is Ca(2+). As to expression, expressed in the root tip meristems.

The protein resides in the secreted. It is found in the vacuole. The catalysed reaction is 2 a phenolic donor + H2O2 = 2 a phenolic radical donor + 2 H2O. Removal of H(2)O(2), oxidation of toxic reductants, biosynthesis and degradation of lignin, suberization, auxin catabolism, response to environmental stresses such as wounding, pathogen attack and oxidative stress. These functions might be dependent on each isozyme/isoform in each plant tissue. This is Peroxidase 1 (PER1) from Zea mays (Maize).